We begin with the raw amino-acid sequence, 281 residues long: Phosphatidylserine decarboxylase proenzyme (281 aa).

Residues Asp90, His143, and Ser248 each act as charge relay system; for autoendoproteolytic cleavage activity in the active site. Ser248 (schiff-base intermediate with substrate; via pyruvic acid; for decarboxylase activity) is an active-site residue. Residue Ser248 is modified to Pyruvic acid (Ser); by autocatalysis.

This sequence belongs to the phosphatidylserine decarboxylase family. PSD-B subfamily. Prokaryotic type I sub-subfamily. In terms of assembly, heterodimer of a large membrane-associated beta subunit and a small pyruvoyl-containing alpha subunit. Pyruvate is required as a cofactor. Is synthesized initially as an inactive proenzyme. Formation of the active enzyme involves a self-maturation process in which the active site pyruvoyl group is generated from an internal serine residue via an autocatalytic post-translational modification. Two non-identical subunits are generated from the proenzyme in this reaction, and the pyruvate is formed at the N-terminus of the alpha chain, which is derived from the carboxyl end of the proenzyme. The autoendoproteolytic cleavage occurs by a canonical serine protease mechanism, in which the side chain hydroxyl group of the serine supplies its oxygen atom to form the C-terminus of the beta chain, while the remainder of the serine residue undergoes an oxidative deamination to produce ammonia and the pyruvoyl prosthetic group on the alpha chain. During this reaction, the Ser that is part of the protease active site of the proenzyme becomes the pyruvoyl prosthetic group, which constitutes an essential element of the active site of the mature decarboxylase.

It localises to the cell membrane. The catalysed reaction is a 1,2-diacyl-sn-glycero-3-phospho-L-serine + H(+) = a 1,2-diacyl-sn-glycero-3-phosphoethanolamine + CO2. It functions in the pathway phospholipid metabolism; phosphatidylethanolamine biosynthesis; phosphatidylethanolamine from CDP-diacylglycerol: step 2/2. Its function is as follows. Catalyzes the formation of phosphatidylethanolamine (PtdEtn) from phosphatidylserine (PtdSer). The chain is Phosphatidylserine decarboxylase proenzyme from Francisella philomiragia subsp. philomiragia (strain ATCC 25017 / CCUG 19701 / FSC 153 / O#319-036).